A 95-amino-acid chain; its full sequence is Aspartyl/glutamyl-tRNA(Asn/Gln) amidotransferase subunit C (95 aa).

This sequence belongs to the GatC family. As to quaternary structure, heterotrimer of A, B and C subunits.

It carries out the reaction L-glutamyl-tRNA(Gln) + L-glutamine + ATP + H2O = L-glutaminyl-tRNA(Gln) + L-glutamate + ADP + phosphate + H(+). The enzyme catalyses L-aspartyl-tRNA(Asn) + L-glutamine + ATP + H2O = L-asparaginyl-tRNA(Asn) + L-glutamate + ADP + phosphate + 2 H(+). Functionally, allows the formation of correctly charged Asn-tRNA(Asn) or Gln-tRNA(Gln) through the transamidation of misacylated Asp-tRNA(Asn) or Glu-tRNA(Gln) in organisms which lack either or both of asparaginyl-tRNA or glutaminyl-tRNA synthetases. The reaction takes place in the presence of glutamine and ATP through an activated phospho-Asp-tRNA(Asn) or phospho-Glu-tRNA(Gln). The chain is Aspartyl/glutamyl-tRNA(Asn/Gln) amidotransferase subunit C from Campylobacter fetus subsp. fetus (strain 82-40).